The chain runs to 295 residues: Farnesyl diphosphate synthase (295 aa).

Positions 46, 49, and 78 each coordinate isopentenyl diphosphate. Mg(2+) is bound by residues Asp-85 and Asp-91. A (2E)-geranyl diphosphate-binding site is contributed by Arg-96. Position 97 (Arg-97) interacts with isopentenyl diphosphate. (2E)-geranyl diphosphate is bound by residues Lys-180, Thr-181, Gln-220, and Lys-237.

This sequence belongs to the FPP/GGPP synthase family. Mg(2+) serves as cofactor.

The protein localises to the cytoplasm. The catalysed reaction is isopentenyl diphosphate + (2E)-geranyl diphosphate = (2E,6E)-farnesyl diphosphate + diphosphate. This is Farnesyl diphosphate synthase (ispA) from Haemophilus influenzae (strain ATCC 51907 / DSM 11121 / KW20 / Rd).